The following is a 431-amino-acid chain: Hydroxylamine reductase (431 aa).

[4Fe-4S] cluster-binding residues include Cys-5, Cys-8, Cys-17, and Cys-23. His-131, Glu-155, Cys-199, Cys-286, Cys-314, Cys-339, Glu-373, and Lys-375 together coordinate hybrid [4Fe-2O-2S] cluster. Residue Cys-286 is modified to Cysteine persulfide.

Belongs to the HCP family. It depends on [4Fe-4S] cluster as a cofactor. Hybrid [4Fe-2O-2S] cluster is required as a cofactor.

It localises to the cytoplasm. It catalyses the reaction A + NH4(+) + H2O = hydroxylamine + AH2 + H(+). In terms of biological role, catalyzes the reduction of hydroxylamine to form NH(3) and H(2)O. The sequence is that of Hydroxylamine reductase from Thermotoga maritima (strain ATCC 43589 / DSM 3109 / JCM 10099 / NBRC 100826 / MSB8).